The following is a 400-amino-acid chain: Phosphoglycerate kinase (400 aa).

Residues 20–22 (DLN), Arg-35, 58–61 (HQGR), Arg-115, and Arg-155 contribute to the substrate site. ATP is bound by residues Glu-330 and 356 to 359 (GGDT).

It belongs to the phosphoglycerate kinase family. As to quaternary structure, monomer.

It is found in the cytoplasm. The enzyme catalyses (2R)-3-phosphoglycerate + ATP = (2R)-3-phospho-glyceroyl phosphate + ADP. It participates in carbohydrate degradation; glycolysis; pyruvate from D-glyceraldehyde 3-phosphate: step 2/5. This is Phosphoglycerate kinase from Haloarcula marismortui (strain ATCC 43049 / DSM 3752 / JCM 8966 / VKM B-1809) (Halobacterium marismortui).